The sequence spans 239 residues: Orotidine 5'-phosphate decarboxylase (239 aa).

Substrate-binding positions include D15, K36, 63-72 (DLKFHDIPNT), T127, R189, Q198, G218, and R219. K65 functions as the Proton donor in the catalytic mechanism.

The protein belongs to the OMP decarboxylase family. Type 1 subfamily. In terms of assembly, homodimer.

The enzyme catalyses orotidine 5'-phosphate + H(+) = UMP + CO2. The protein operates within pyrimidine metabolism; UMP biosynthesis via de novo pathway; UMP from orotate: step 2/2. In terms of biological role, catalyzes the decarboxylation of orotidine 5'-monophosphate (OMP) to uridine 5'-monophosphate (UMP). The chain is Orotidine 5'-phosphate decarboxylase from Prochlorococcus marinus (strain MIT 9515).